An 88-amino-acid chain; its full sequence is Small ribosomal subunit protein bS16 (88 aa).

Belongs to the bacterial ribosomal protein bS16 family.

The chain is Small ribosomal subunit protein bS16 from Geobacter metallireducens (strain ATCC 53774 / DSM 7210 / GS-15).